The chain runs to 178 residues: Large ribosomal subunit protein bL25 (178 aa).

Belongs to the bacterial ribosomal protein bL25 family. CTC subfamily. As to quaternary structure, part of the 50S ribosomal subunit; part of the 5S rRNA/L5/L18/L25 subcomplex. Contacts the 5S rRNA. Binds to the 5S rRNA independently of L5 and L18.

In terms of biological role, this is one of the proteins that binds to the 5S RNA in the ribosome where it forms part of the central protuberance. The chain is Large ribosomal subunit protein bL25 from Campylobacter jejuni subsp. jejuni serotype O:23/36 (strain 81-176).